Consider the following 445-residue polypeptide: Histidinol dehydrogenase (445 aa).

Y138, Q199, and N222 together coordinate NAD(+). Substrate is bound by residues S245, Q267, and H270. Q267 and H270 together coordinate Zn(2+). Residues E335 and H336 each act as proton acceptor in the active site. Substrate is bound by residues H336, D369, E423, and H428. Position 369 (D369) interacts with Zn(2+). H428 is a binding site for Zn(2+).

This sequence belongs to the histidinol dehydrogenase family. Requires Zn(2+) as cofactor.

It carries out the reaction L-histidinol + 2 NAD(+) + H2O = L-histidine + 2 NADH + 3 H(+). It participates in amino-acid biosynthesis; L-histidine biosynthesis; L-histidine from 5-phospho-alpha-D-ribose 1-diphosphate: step 9/9. Its function is as follows. Catalyzes the sequential NAD-dependent oxidations of L-histidinol to L-histidinaldehyde and then to L-histidine. This is Histidinol dehydrogenase from Burkholderia mallei (strain ATCC 23344).